The sequence spans 865 residues: Protein translocase subunit SecA (865 aa).

ATP contacts are provided by residues glutamine 93, 111–115 (GEGKT), and aspartate 501. Zn(2+)-binding residues include cysteine 841, cysteine 843, cysteine 852, and cysteine 853.

Belongs to the SecA family. In terms of assembly, monomer and homodimer. Part of the essential Sec protein translocation apparatus which comprises SecA, SecYEG and auxiliary proteins SecDF-YajC and YidC. The cofactor is Zn(2+).

Its subcellular location is the cell inner membrane. It localises to the cytoplasm. The catalysed reaction is ATP + H2O + cellular proteinSide 1 = ADP + phosphate + cellular proteinSide 2.. Functionally, part of the Sec protein translocase complex. Interacts with the SecYEG preprotein conducting channel. Has a central role in coupling the hydrolysis of ATP to the transfer of proteins into and across the cell membrane, serving as an ATP-driven molecular motor driving the stepwise translocation of polypeptide chains across the membrane. In Helicobacter pylori (strain J99 / ATCC 700824) (Campylobacter pylori J99), this protein is Protein translocase subunit SecA.